A 601-amino-acid chain; its full sequence is Probable translation initiation factor IF-2 (601 aa).

The region spanning 10–227 is the tr-type G domain; it reads LRAPIVVVLG…VLAGLAQRYL (218 aa). The segment at 19–26 is G1; that stretch reads GHVDAGKT. 19–26 is a binding site for GTP; the sequence is GHVDAGKT. The G2 stretch occupies residues 44 to 48; the sequence is TMTQH. The tract at residues 83-86 is G3; that stretch reads DTPG. GTP-binding positions include 83–87 and 137–140; these read DTPGH and NKID. Positions 137–140 are G4; the sequence is NKID. The interval 205-207 is G5; sequence SAV.

It belongs to the TRAFAC class translation factor GTPase superfamily. Classic translation factor GTPase family. IF-2 subfamily.

Its function is as follows. Function in general translation initiation by promoting the binding of the formylmethionine-tRNA to ribosomes. Seems to function along with eIF-2. The sequence is that of Probable translation initiation factor IF-2 from Thermofilum pendens (strain DSM 2475 / Hrk 5).